The sequence spans 692 residues: MSVVNESRKRRRLIHSEKETRRLDLGEEDDLELFQKEAAWRRSREYEHLTVLEKKLYEYWESLVLKLDHYVAAALENHEQSFEELEKITASLYQPDDNLQTLDLSLAEFSLIKDAQNYLNKYASYFQAHEPTLQKLAKFGSFKLKETPNVHEWIDQRQVHFTSMINYRTSQLKLALLKRKLSFFREALNSAELEWKRVQQDQLTSASERSIENIADDIPASEPKAILENGEGCLNDNDNISKLKNNFQSQADLMQANINSKLDELSQKSTRAAQLYVDIMGITDERVSREPHYLELKGVLSSNEEKIESINRDLSSLFEDIQFFISQRTKRQKDIIDLKLACVKEKQQLIKTLESSLTQIRNERDSLVAKQQMQYTNNLFFDDMMLLLSNLSNARVAILEGYSNRLCIWDRIERSKTGEMNNVLDEKEEISASSALEKLIKNNSCLEAELPSMYAAFDQSQSRLLKKYEELETKEKKALEMHYEKARATQKYFAAMKARDILMTEKKTLKLAENKEHDYIGKLQEREHALTKYESSLKAELEVYKQIKEIYGKHSVEVLTEDKHLQVKQTKLTQKLEDLIESVQKSGEKLMIMHQKLFHLQEEHTILSIKASYNKKESHLINQAYETQEAQVYKGMLKCSVCNFSNWKSKLIPNCGHAFCSNCMEPFYEHKTSTCPQCETPFSVSDILTIHL.

Residues 302–370 are a coiled coil; sequence SNEEKIESIN…RNERDSLVAK (69 aa). An RING-type zinc finger spans residues 639-679; the sequence is CSVCNFSNWKSKLIPNCGHAFCSNCMEPFYEHKTSTCPQCE.

It belongs to the BRE1 family. As to quaternary structure, component of the histone H2B ubiquitin ligase complex (HULC) composed of at least brl1, brl2, rhp6 and shf1.

It localises to the nucleus. It catalyses the reaction S-ubiquitinyl-[E2 ubiquitin-conjugating enzyme]-L-cysteine + [acceptor protein]-L-lysine = [E2 ubiquitin-conjugating enzyme]-L-cysteine + N(6)-ubiquitinyl-[acceptor protein]-L-lysine.. It participates in protein modification; protein ubiquitination. In terms of biological role, E3 ubiquitin-protein ligase which belongs to the histone H2B ubiquitin ligase complex (HULC) which mediates monoubiquitination of histone H2B to form H2BK123ub1. H2BK123ub1 gives a specific tag for epigenetic transcriptional activation and is also a prerequisite for H3K4me and H3K79me formation. This chain is E3 ubiquitin-protein ligase brl1 (brl1), found in Schizosaccharomyces pombe (strain 972 / ATCC 24843) (Fission yeast).